The primary structure comprises 216 residues: Large ribosomal subunit protein uL1 (216 aa).

It belongs to the universal ribosomal protein uL1 family.

In Caenorhabditis elegans, this protein is Large ribosomal subunit protein uL1.